Consider the following 417-residue polypeptide: Blood group Rh(CE) polypeptide (417 aa).

The next 11 membrane-spanning stretches (helical) occupy residues 12–32, 44–64, 77–97, 125–145, 172–192, 203–223, 238–258, 265–285, 287–307, 331–351, and 358–378; these read CLPLCALTLEAALILLFYFFT, LVASYQVGQDLTVMAALGLGF, VAFNLFMLALGVQWAILLDGF, ISAGAVLGKVNLAQLVVMVLV, FYVFAAYFGLTVAWCLPKPLP, TIPSLSAMLGALFLWMFWPSV, MFNTYYALAVSVVTAISGSSL, ISMTYVHSAVLAGGVAVGTSC, LIPSPWLAMVLGLVAGLISIG, IFSLLGLLGEITYIVLLVLHT, and MIGFQVLLSIGELSLAIVIAL.

The protein belongs to the ammonium transporter (TC 2.A.49) family. Rh subfamily. In terms of assembly, heterotrimer; a RHCE monomer interacts with a RHAG homodimer. Component of the ankyrin-1 complex in the erythrocyte, composed of ANK1, RHCE, RHAG, SLC4A1, EPB42, GYPA, GYPB and AQP1. Interacts (via the N- and C-terminal) with ANK1 (via ANk 1-5 repeats); mediates the primary membrane attachment site for ANK1. Restricted to tissues or cell lines expressing erythroid characters. Isoform 4g and isoform RhPI-Alpha are expressed in immature erythroblasts but not in mature erythroblasts.

It localises to the membrane. Component of the ankyrin-1 complex, a multiprotein complex involved in the stability and shape of the erythrocyte membrane. Mediates the primary membrane attachment site for ANK1 when associated with RHAG. May participate in the ammonium and carbon dioxide transport through the heterotrimer form. This Homo sapiens (Human) protein is Blood group Rh(CE) polypeptide.